A 763-amino-acid polypeptide reads, in one-letter code: C6 finger domain transcription factor hasF (763 aa).

The span at methionine 1–serine 20 shows a compositional bias: low complexity. The disordered stretch occupies residues methionine 1 to lysine 25. The zn(2)-C6 fungal-type DNA-binding region spans cysteine 34–cysteine 61. 3 disordered regions span residues proline 68–glutamine 91, glycine 112–glutamate 145, and aspartate 189–threonine 219. The span at serine 80–serine 89 shows a compositional bias: polar residues. Residues aspartate 197–proline 209 are compositionally biased toward pro residues.

It localises to the nucleus. Its function is as follows. Transcription factor; part of the gene cluster that mediates the biosynthesis of hexadehydro-astechrome (HAS), a tryptophan-derived iron(III)-complex that acts as a virulence factor in infected mice. Does not regulate the expression of the HAS biosynthetic genes (at least under the growth conditions tested). In Aspergillus fumigatus (strain CBS 144.89 / FGSC A1163 / CEA10) (Neosartorya fumigata), this protein is C6 finger domain transcription factor hasF.